A 470-amino-acid chain; its full sequence is Trigger factor (470 aa).

Positions 164–243 constitute a PPIase FKBP-type domain; sequence GDYVVIDMTA…VTAVKVQELP (80 aa). 2 stretches are compositionally biased toward acidic residues: residues 424-438 and 445-470; these read ETDAEDAAEGVESVE and AEDDAEETSDEPAAEDTATEDEAAKA. Positions 424 to 470 are disordered; sequence ETDAEDAAEGVESVEVDLSAAAEDDAEETSDEPAAEDTATEDEAAKA.

It belongs to the FKBP-type PPIase family. Tig subfamily.

The protein localises to the cytoplasm. The catalysed reaction is [protein]-peptidylproline (omega=180) = [protein]-peptidylproline (omega=0). In terms of biological role, involved in protein export. Acts as a chaperone by maintaining the newly synthesized protein in an open conformation. Functions as a peptidyl-prolyl cis-trans isomerase. The sequence is that of Trigger factor from Beutenbergia cavernae (strain ATCC BAA-8 / DSM 12333 / CCUG 43141 / JCM 11478 / NBRC 16432 / NCIMB 13614 / HKI 0122).